The primary structure comprises 207 residues: Ribosomal RNA small subunit methyltransferase G (207 aa).

S-adenosyl-L-methionine is bound by residues G74, L79, 125–126 (VE), and R140.

It belongs to the methyltransferase superfamily. RNA methyltransferase RsmG family.

The protein localises to the cytoplasm. The enzyme catalyses guanosine(527) in 16S rRNA + S-adenosyl-L-methionine = N(7)-methylguanosine(527) in 16S rRNA + S-adenosyl-L-homocysteine. In terms of biological role, specifically methylates the N7 position of guanine in position 527 of 16S rRNA. This Shewanella pealeana (strain ATCC 700345 / ANG-SQ1) protein is Ribosomal RNA small subunit methyltransferase G.